The sequence spans 208 residues: Ribosomal RNA large subunit methyltransferase E (208 aa).

The S-adenosyl-L-methionine site is built by G63, W65, D83, D99, and D124. K164 acts as the Proton acceptor in catalysis.

Belongs to the class I-like SAM-binding methyltransferase superfamily. RNA methyltransferase RlmE family.

Its subcellular location is the cytoplasm. It carries out the reaction uridine(2552) in 23S rRNA + S-adenosyl-L-methionine = 2'-O-methyluridine(2552) in 23S rRNA + S-adenosyl-L-homocysteine + H(+). In terms of biological role, specifically methylates the uridine in position 2552 of 23S rRNA at the 2'-O position of the ribose in the fully assembled 50S ribosomal subunit. The chain is Ribosomal RNA large subunit methyltransferase E from Salmonella arizonae (strain ATCC BAA-731 / CDC346-86 / RSK2980).